The primary structure comprises 309 residues: Elongation factor Ts (309 aa).

The tract at residues threonine 98–valine 101 is involved in Mg(2+) ion dislocation from EF-Tu.

This sequence belongs to the EF-Ts family.

Its subcellular location is the cytoplasm. Associates with the EF-Tu.GDP complex and induces the exchange of GDP to GTP. It remains bound to the aminoacyl-tRNA.EF-Tu.GTP complex up to the GTP hydrolysis stage on the ribosome. This Orientia tsutsugamushi (strain Boryong) (Rickettsia tsutsugamushi) protein is Elongation factor Ts.